We begin with the raw amino-acid sequence, 157 residues long: uncharacterized protein (157 aa).

An N-terminal signal peptide occupies residues 1–17; it reads MSMKTKAAFHLVLFGLA. The N-palmitoyl cysteine moiety is linked to residue cysteine 18. A lipid anchor (S-diacylglycerol cysteine) is attached at cysteine 18. 3 helical membrane passes run 42–64, 98–120, and 124–146; these read MVFD…YLYL, ASYI…YPLF, and IPFF…YVIS.

It is found in the cell membrane. This is an uncharacterized protein from Bacillus subtilis (strain 168).